The sequence spans 453 residues: Phosphoglucosamine mutase (453 aa).

Catalysis depends on Ser108, which acts as the Phosphoserine intermediate. Ser108, Asp247, Asp249, and Asp251 together coordinate Mg(2+). A Phosphoserine modification is found at Ser108.

The protein belongs to the phosphohexose mutase family. It depends on Mg(2+) as a cofactor. Post-translationally, activated by phosphorylation.

It catalyses the reaction alpha-D-glucosamine 1-phosphate = D-glucosamine 6-phosphate. Its function is as follows. Catalyzes the conversion of glucosamine-6-phosphate to glucosamine-1-phosphate. The chain is Phosphoglucosamine mutase from Methylobacillus flagellatus (strain ATCC 51484 / DSM 6875 / VKM B-1610 / KT).